The following is a 435-amino-acid chain: Eukaryotic translation initiation factor 3 subunit E (435 aa).

The region spanning 219–392 (FFNHPKGRDL…GHVVMGTQPL (174 aa)) is the PCI domain.

It belongs to the eIF-3 subunit E family. In terms of assembly, component of the eukaryotic translation initiation factor 3 (eIF-3) complex. The eIF-3 complex interacts with pix. Interacts with mxt.

It localises to the cytoplasm. In terms of biological role, component of the eukaryotic translation initiation factor 3 (eIF-3) complex, which is involved in protein synthesis of a specialized repertoire of mRNAs and, together with other initiation factors, stimulates binding of mRNA and methionyl-tRNAi to the 40S ribosome. The eIF-3 complex specifically targets and initiates translation of a subset of mRNAs involved in cell proliferation. This Drosophila erecta (Fruit fly) protein is Eukaryotic translation initiation factor 3 subunit E (eIF3-S6).